The primary structure comprises 67 residues: Large ribosomal subunit protein bL31 (67 aa).

4 residues coordinate Zn(2+): C16, C18, C36, and C39.

Belongs to the bacterial ribosomal protein bL31 family. Type A subfamily. Part of the 50S ribosomal subunit. Requires Zn(2+) as cofactor.

Binds the 23S rRNA. The sequence is that of Large ribosomal subunit protein bL31 from Treponema denticola (strain ATCC 35405 / DSM 14222 / CIP 103919 / JCM 8153 / KCTC 15104).